The chain runs to 127 residues: DNA-directed RNA polymerase subunit omega (127 aa).

It belongs to the RNA polymerase subunit omega family. The RNAP catalytic core consists of 2 alpha, 1 beta, 1 beta' and 1 omega subunit. When a sigma factor is associated with the core the holoenzyme is formed, which can initiate transcription.

It carries out the reaction RNA(n) + a ribonucleoside 5'-triphosphate = RNA(n+1) + diphosphate. Its function is as follows. Promotes RNA polymerase assembly. Latches the N- and C-terminal regions of the beta' subunit thereby facilitating its interaction with the beta and alpha subunits. The sequence is that of DNA-directed RNA polymerase subunit omega (rpoZ) from Rickettsia prowazekii (strain Madrid E).